A 53-amino-acid chain; its full sequence is Cytochrome c-552 (53 aa).

4 residues coordinate heme c: cysteine 19, cysteine 22, histidine 23, and methionine 44.

Post-translationally, binds 1 heme c group covalently per subunit.

It localises to the cell membrane. This Schinkia azotoformans (Bacillus azotoformans) protein is Cytochrome c-552.